Consider the following 168-residue polypeptide: Heat shock protein beta-9 (168 aa).

The segment covering 1-12 has biased composition (polar residues); sequence MQRVGSSFSTGQ. Disordered regions lie at residues 1-25, 83-104, and 129-168; these read MQRV…SRCP, TGQR…EQSV, and LWLR…VKNP. A sHSP domain is found at 38 to 151; that stretch reads LPVRLLRDEV…EAQTGQSQKP (114 aa). The segment covering 86–104 has biased composition (basic and acidic residues); it reads RQHESNDPSRGRYRMEQSV. Over residues 158 to 168 the composition is skewed to polar residues; it reads SSLQNESVKNP.

Belongs to the small heat shock protein (HSP20) family. As to expression, testis specific.

The protein resides in the cytoplasm. It is found in the nucleus. This Mus musculus (Mouse) protein is Heat shock protein beta-9 (Hspb9).